The following is a 193-amino-acid chain: Large ribosomal subunit protein eL18 (193 aa).

The segment at 158-193 (HFGAAGVPGSHAKPHVSSRGKERQRSSKRRHAFRHK) is disordered. Residues 183–193 (SSKRRHAFRHK) show a composition bias toward basic residues.

Belongs to the eukaryotic ribosomal protein eL18 family.

The protein localises to the cytoplasm. The chain is Large ribosomal subunit protein eL18 (RPL18-A) from Trypanosoma brucei brucei (strain 927/4 GUTat10.1).